Consider the following 326-residue polypeptide: 4-hydroxythreonine-4-phosphate dehydrogenase (326 aa).

2 residues coordinate substrate: histidine 132 and threonine 133. The a divalent metal cation site is built by histidine 162, histidine 207, and histidine 262. 3 residues coordinate substrate: lysine 270, asparagine 279, and arginine 288.

This sequence belongs to the PdxA family. In terms of assembly, homodimer. The cofactor is Zn(2+). Mg(2+) serves as cofactor. It depends on Co(2+) as a cofactor.

Its subcellular location is the cytoplasm. It catalyses the reaction 4-(phosphooxy)-L-threonine + NAD(+) = 3-amino-2-oxopropyl phosphate + CO2 + NADH. The protein operates within cofactor biosynthesis; pyridoxine 5'-phosphate biosynthesis; pyridoxine 5'-phosphate from D-erythrose 4-phosphate: step 4/5. Its function is as follows. Catalyzes the NAD(P)-dependent oxidation of 4-(phosphooxy)-L-threonine (HTP) into 2-amino-3-oxo-4-(phosphooxy)butyric acid which spontaneously decarboxylates to form 3-amino-2-oxopropyl phosphate (AHAP). In Ruegeria sp. (strain TM1040) (Silicibacter sp.), this protein is 4-hydroxythreonine-4-phosphate dehydrogenase.